The sequence spans 201 residues: Glycerol-3-phosphate acyltransferase (201 aa).

Helical transmembrane passes span 5–25 (LLGAVLVAAGYLAGSIPFGVV), 55–75 (KMGVLVLVLDAAKAIVPILLA), 88–108 (WSTAVAVAAFVGHLFPVWLGF), 118–138 (LGIFAVLAPWAALAGLVGYAV), and 164–184 (TYGVRHPVPWAGLAIALLIFL).

It belongs to the PlsY family. Probably interacts with PlsX.

It is found in the cell inner membrane. It carries out the reaction an acyl phosphate + sn-glycerol 3-phosphate = a 1-acyl-sn-glycero-3-phosphate + phosphate. It functions in the pathway lipid metabolism; phospholipid metabolism. Catalyzes the transfer of an acyl group from acyl-phosphate (acyl-PO(4)) to glycerol-3-phosphate (G3P) to form lysophosphatidic acid (LPA). This enzyme utilizes acyl-phosphate as fatty acyl donor, but not acyl-CoA or acyl-ACP. The protein is Glycerol-3-phosphate acyltransferase of Anaeromyxobacter dehalogenans (strain 2CP-C).